Here is a 300-residue protein sequence, read N- to C-terminus: MCKQMNLEGLTTEARNEATKKIDQVSTLEMVTLINQEDQKVAQAIEKVLPQIAAAIDAAAERFKKGGRLIYCGAGTSGRLGALDAIELTPTYSVSPERAFGILAGGEKAMYQAIEGAEDSKELAIEDLTQHQLTARDVVIAIAASGRTPYAVSAIEYGKKVGALTISVTCNNQSPMNQLAEIGIAPIVGPEVITGSTRMKAGSAQKMVLNMFSTGIMVKVGNIYQNLMVNVQPTNEKLIQRATNIIKEAAEIEESQAKEYLEAAQLEVAPAIVMAKAHVDFQKAKQLLAEHDGRISEVLA.

In terms of domain architecture, SIS spans 59-222 (AAERFKKGGR…STGIMVKVGN (164 aa)). Glutamate 87 serves as the catalytic Proton donor. The active site involves glutamate 118.

It belongs to the GCKR-like family. MurNAc-6-P etherase subfamily. Homodimer.

It catalyses the reaction N-acetyl-D-muramate 6-phosphate + H2O = N-acetyl-D-glucosamine 6-phosphate + (R)-lactate. It participates in amino-sugar metabolism; N-acetylmuramate degradation. In terms of biological role, specifically catalyzes the cleavage of the D-lactyl ether substituent of MurNAc 6-phosphate, producing GlcNAc 6-phosphate and D-lactate. In Enterococcus faecalis (strain ATCC 700802 / V583), this protein is N-acetylmuramic acid 6-phosphate etherase 1.